An 863-amino-acid polypeptide reads, in one-letter code: Glycerol-3-phosphate acyltransferase (863 aa).

Residues 1–29 (MPKKNSPLLPKETTTTQSSVDTSGSSNLT) form a disordered region. Polar residues predominate over residues 12–29 (ETTTTQSSVDTSGSSNLT). Positions 343–348 (SHRSHI) match the HXXXXD motif motif.

Belongs to the GPAT/DAPAT family.

It is found in the cell inner membrane. It carries out the reaction sn-glycerol 3-phosphate + an acyl-CoA = a 1-acyl-sn-glycero-3-phosphate + CoA. Its pathway is phospholipid metabolism; CDP-diacylglycerol biosynthesis; CDP-diacylglycerol from sn-glycerol 3-phosphate: step 1/3. The protein is Glycerol-3-phosphate acyltransferase of Xylella fastidiosa (strain M12).